The primary structure comprises 608 residues: Elongation factor 4 (608 aa).

Positions Lys-11–Ser-193 constitute a tr-type G domain. GTP is bound by residues Asp-23–Thr-28 and Asn-140–Asp-143.

It belongs to the TRAFAC class translation factor GTPase superfamily. Classic translation factor GTPase family. LepA subfamily.

It localises to the cell membrane. The catalysed reaction is GTP + H2O = GDP + phosphate + H(+). Required for accurate and efficient protein synthesis under certain stress conditions. May act as a fidelity factor of the translation reaction, by catalyzing a one-codon backward translocation of tRNAs on improperly translocated ribosomes. Back-translocation proceeds from a post-translocation (POST) complex to a pre-translocation (PRE) complex, thus giving elongation factor G a second chance to translocate the tRNAs correctly. Binds to ribosomes in a GTP-dependent manner. This Listeria innocua serovar 6a (strain ATCC BAA-680 / CLIP 11262) protein is Elongation factor 4.